Consider the following 54-residue polypeptide: Putative ATP synthase subunit epsilon, mitochondrial (54 aa).

Belongs to the eukaryotic ATPase epsilon family. As to quaternary structure, F-type ATPases have 2 components, CF(1) - the catalytic core - and CF(0) - the membrane proton channel. CF(1) has five subunits: alpha(3), beta(3), gamma(1), delta(1), epsilon(1). CF(0) seems to have nine subunits: a, b, c, d, e, f, g, F6 and 8 (or A6L).

The protein resides in the mitochondrion. Its subcellular location is the mitochondrion inner membrane. Mitochondrial membrane ATP synthase (F(1)F(0) ATP synthase or Complex V) produces ATP from ADP in the presence of a proton gradient across the membrane which is generated by electron transport complexes of the respiratory chain. F-type ATPases consist of two structural domains, F(1) - containing the extramembraneous catalytic core, and F(0) - containing the membrane proton channel, linked together by a central stalk and a peripheral stalk. During catalysis, ATP synthesis in the catalytic domain of F(1) is coupled via a rotary mechanism of the central stalk subunits to proton translocation. Part of the complex F(1) domain and of the central stalk which is part of the complex rotary element. Rotation of the central stalk against the surrounding alpha(3)beta(3) subunits leads to hydrolysis of ATP in three separate catalytic sites on the beta subunits. This chain is Putative ATP synthase subunit epsilon, mitochondrial, found in Caenorhabditis elegans.